Here is a 722-residue protein sequence, read N- to C-terminus: Pesticidal crystal protein Cry22Aa (722 aa).

Functionally, promotes colloidosmotic lysis by binding to the midgut epithelial cells of hymenopteran species. The protein is Pesticidal crystal protein Cry22Aa (cry22Aa) of Bacillus thuringiensis.